Reading from the N-terminus, the 76-residue chain is Omega-scoloptoxin(15)-Ssd3c (76 aa).

The signal sequence occupies residues 1 to 23 (MEKKIIFLVVLVALLALPEFISS).

Belongs to the scoloptoxin-15 family. In terms of processing, contains 2 disulfide bonds. As to expression, expressed by the venom gland.

The protein localises to the secreted. Its function is as follows. Voltage-gated calcium channel inhibitor (Cav) (8.6% block at 10 nM), when tested on DRG neurons. The sequence is that of Omega-scoloptoxin(15)-Ssd3c from Scolopendra dehaani (Thai centipede).